The following is a 448-amino-acid chain: MRKLFGTDGVRGTANTHPMTAEMALRIGAAVGRYFRREAGGVHRVVIGKDTRLSGYMFENALTAGLASTGMNVLLLGPVPTPAVGLMTRSMRADLGVMISASHNSAEDNGIKFFGPDGFKLSDQAEMEIEEMVATGVRLAQAHNIGRVRRVDDARFRYGERVKSSLTRGLRLDGLKVVVDCANGAAHRTAPEILWELGADVVPIGTSPDGLNINRGCGSTCPRTASEAVVAHGADVGICLDGDADRVIVIDQLGNVADGDQIMALLAARWAAEGRLQGGALVATVMSNLGLERFLGDRGIGLERTAVGDRYVVERMREGGFNLGGEQSGHIVMSDFATTGDGLMAGLHFLGEMMRSGQPSSELVRQFVPVPQLLKNVRFAKGQTPLDAASVQSAIAEAEGVLNGSGRLLIRKSGTEPLIRVMAECEDEALLTRAVDSVVEAVADAVQA.

Serine 102 functions as the Phosphoserine intermediate in the catalytic mechanism. Residues serine 102, aspartate 241, aspartate 243, and aspartate 245 each coordinate Mg(2+). Residue serine 102 is modified to Phosphoserine.

It belongs to the phosphohexose mutase family. The cofactor is Mg(2+). In terms of processing, activated by phosphorylation.

The enzyme catalyses alpha-D-glucosamine 1-phosphate = D-glucosamine 6-phosphate. Functionally, catalyzes the conversion of glucosamine-6-phosphate to glucosamine-1-phosphate. This Ruegeria pomeroyi (strain ATCC 700808 / DSM 15171 / DSS-3) (Silicibacter pomeroyi) protein is Phosphoglucosamine mutase.